Reading from the N-terminus, the 116-residue chain is Large ribosomal subunit protein bL17 (116 aa).

The protein belongs to the bacterial ribosomal protein bL17 family. As to quaternary structure, part of the 50S ribosomal subunit. Contacts protein L32.

The chain is Large ribosomal subunit protein bL17 from Helicobacter pylori (strain P12).